The sequence spans 412 residues: Tyrosine--tRNA ligase (412 aa).

L-tyrosine is bound at residue Tyr31. The 'HIGH' region motif lies at 36–45 (PTAPSLHIGH). L-tyrosine is bound by residues Tyr162 and Gln166. The 'KMSKS' region signature appears at 222–226 (KIGKT). ATP is bound at residue Lys225. The S4 RNA-binding domain occupies 345–411 (KRWLDIVVEL…GKRKKQVIDL (67 aa)).

It belongs to the class-I aminoacyl-tRNA synthetase family. TyrS type 1 subfamily. In terms of assembly, homodimer.

The protein resides in the cytoplasm. The catalysed reaction is tRNA(Tyr) + L-tyrosine + ATP = L-tyrosyl-tRNA(Tyr) + AMP + diphosphate + H(+). Its function is as follows. Catalyzes the attachment of tyrosine to tRNA(Tyr) in a two-step reaction: tyrosine is first activated by ATP to form Tyr-AMP and then transferred to the acceptor end of tRNA(Tyr). In Chlamydia trachomatis serovar A (strain ATCC VR-571B / DSM 19440 / HAR-13), this protein is Tyrosine--tRNA ligase.